Reading from the N-terminus, the 459-residue chain is Zinc finger transcription factor lin-29 (459 aa).

The segment covering 1–14 (MDQTVLDSAFNSPV) has biased composition (polar residues). The segment at 1-73 (MDQTVLDSAF…GSTGSTPAHH (73 aa)) is disordered. Low complexity predominate over residues 16–56 (SGIAGTTTGSGSTTHFGVGTNFKVSVRSSSRSTDGTDSTDG). The segment covering 57-73 (ANSDNVTGSTGSTPAHH) has biased composition (polar residues). C2H2-type zinc fingers lie at residues 151–173 (YKCTQCVKAFANSSYLSQHMRIH), 180–202 (GPCNYCGKKFTQLSHLQQHIRTH), 208–232 (YKCKFTGCDKAFSQLSNLQSHSRCH), 238–260 (FKCNSCYKCFTDEQSLLDHIPKH), and 269–291 (HICPFCGKSYTQQTYLQKHMTKH). Positions 390-406 (PGFNMITPLENIQRYNG) are interacts with mab-10. A compositionally biased stretch (low complexity) spans 423–444 (VSSTPSSTSSSSAGSSSSQGGV). The tract at residues 423–459 (VSSTPSSTSSSSAGSSSSQGGVFNPQSLINNMKNHSY) is disordered. Polar residues predominate over residues 446-459 (NPQSLINNMKNHSY).

Interacts (via C-terminus) with transcription cofactor mab-10. In terms of tissue distribution, expressed in lateral hypodermal seam cells (at protein level).

Its subcellular location is the nucleus. In terms of biological role, transcription factor which regulates the expression of various genes, including those involved in cuticle synthesis and maintenance, such as collagens, and in lipid metabolism. Binds to promoter regions of genes, at 5'-[(T/G)TTTTTT(A/T/C/G)]-3' consensus sequences. Heterochronic protein which controls the choice of stage specific cell fates, including at the juvenile to adult transition. Promotes differentiation, together with transcriptional cofactor mab-10, perhaps as part of a transcriptional complex. Required for vulval morphogenesis and egg laying; perhaps by acting in a subset of the lateral seam cells. Involved in the exit of seam cells from the cell cycle. Required for specification of uterine pi-cell fate, acting upstream of lin-12 Notch signaling, perhaps via maintenance of lag-2 expression in the anchor cell (AC). Involved in morphogenesis of the specialized male tail used in mating. Acts cell non-autonomously from the hypodermis to regulate expression of genes in the intestine, including genes involved in lipid metabolism. May regulate vitellogenesis via the mTORC2 signaling mediated pathway, independently of daf-16. May promote nuclear accumulation of mab-10 in seam cells post-transcriptionally. Dispensable for seam cell fusion. Its function is as follows. Required for seam cell fusion. The chain is Zinc finger transcription factor lin-29 from Caenorhabditis elegans.